Here is a 401-residue protein sequence, read N- to C-terminus: Imidazolonepropionase (401 aa).

Fe(3+) contacts are provided by His-70 and His-72. Residues His-70 and His-72 each contribute to the Zn(2+) site. Positions 79, 142, and 175 each coordinate 4-imidazolone-5-propanoate. Tyr-142 is a binding site for N-formimidoyl-L-glutamate. Residue His-238 coordinates Fe(3+). His-238 serves as a coordination point for Zn(2+). Gln-241 contacts 4-imidazolone-5-propanoate. Fe(3+) is bound at residue Asp-313. Asp-313 provides a ligand contact to Zn(2+). Positions 315 and 317 each coordinate N-formimidoyl-L-glutamate. Position 318 (Thr-318) interacts with 4-imidazolone-5-propanoate.

The protein belongs to the metallo-dependent hydrolases superfamily. HutI family. It depends on Zn(2+) as a cofactor. The cofactor is Fe(3+).

The protein resides in the cytoplasm. It catalyses the reaction 4-imidazolone-5-propanoate + H2O = N-formimidoyl-L-glutamate. The protein operates within amino-acid degradation; L-histidine degradation into L-glutamate; N-formimidoyl-L-glutamate from L-histidine: step 3/3. Its function is as follows. Catalyzes the hydrolytic cleavage of the carbon-nitrogen bond in imidazolone-5-propanoate to yield N-formimidoyl-L-glutamate. It is the third step in the universal histidine degradation pathway. The protein is Imidazolonepropionase of Xanthomonas oryzae pv. oryzae (strain MAFF 311018).